A 280-amino-acid chain; its full sequence is uncharacterized protein (280 aa).

Residues 1 to 51 (MATSLLLRHSSAVFFSQSSFFTKNKSFRSFTSIKMEKGEAENAVKTKKVFV) constitute a chloroplast transit peptide.

It belongs to the NAD(P)-dependent epimerase/dehydratase family.

Its subcellular location is the plastid. The protein resides in the chloroplast. It is found in the plastoglobule. This is an uncharacterized protein from Arabidopsis thaliana (Mouse-ear cress).